The following is a 135-amino-acid chain: Ribonuclease P protein component 2 (135 aa).

It belongs to the eukaryotic/archaeal RNase P protein component 2 family. Consists of a catalytic RNA component and at least 4-5 protein subunits.

The protein localises to the cytoplasm. The enzyme catalyses Endonucleolytic cleavage of RNA, removing 5'-extranucleotides from tRNA precursor.. In terms of biological role, part of ribonuclease P, a protein complex that generates mature tRNA molecules by cleaving their 5'-ends. This chain is Ribonuclease P protein component 2, found in Methanococcus aeolicus (strain ATCC BAA-1280 / DSM 17508 / OCM 812 / Nankai-3).